The following is a 277-amino-acid chain: MAIKKYKPTSNGRRGMTTSDFAEITTDKPEKSLLAPLHKKGGRNNQGKLTVRHQGGGHKRQYRVIDFKRDKDGIPGRVATVEYDPNRSANIALINYADGEKRYILAPKGIQVGTEIMSGPEADIKVGNALPLINIPVGTVVHNIELKPGKGGQLVRSAGTSAQVLGKEGKYVLVRLNSGEVRMILSACRASIGQVGNEQHELINIGKAGRSRWKGIRPTVRGSVMNPNDHPHGGGEGRAPIGRKSPMSPWGKPTLGFKTRKKKNKSDKFIVRRRKNK.

Residues Thr-219–Lys-277 form a disordered region. The span at Lys-258–Lys-277 shows a compositional bias: basic residues.

It belongs to the universal ribosomal protein uL2 family. Part of the 50S ribosomal subunit. Forms a bridge to the 30S subunit in the 70S ribosome.

Functionally, one of the primary rRNA binding proteins. Required for association of the 30S and 50S subunits to form the 70S ribosome, for tRNA binding and peptide bond formation. It has been suggested to have peptidyltransferase activity; this is somewhat controversial. Makes several contacts with the 16S rRNA in the 70S ribosome. The protein is Large ribosomal subunit protein uL2 of Bacillus subtilis (strain 168).